The following is a 1248-amino-acid chain: von Willebrand factor A domain-containing protein 5B2 (1248 aa).

In terms of domain architecture, VIT spans M1–R138. The tract at residues V184–F204 is disordered. In terms of domain architecture, VWFA spans E354–I527. Disordered stretches follow at residues P590–T650, S672–C710, A751–Q789, S1008–L1037, and D1126–L1168. Residues S595 to L619 show a composition bias toward polar residues. 3 stretches are compositionally biased toward low complexity: residues S684–P701, A751–A764, and P780–Q789. Residues S1127 to Q1145 show a composition bias toward low complexity. The segment covering G1159–L1168 has biased composition (basic and acidic residues).

The polypeptide is von Willebrand factor A domain-containing protein 5B2 (Vwa5b2) (Mus musculus (Mouse)).